The sequence spans 234 residues: Gene 53 protein (234 aa).

The protein is Gene 53 protein (53) of Mycobacterium phage L5 (Mycobacteriophage L5).